A 1004-amino-acid polypeptide reads, in one-letter code: Protein CHUP1, chloroplastic (1004 aa).

A required for chloroplast localization region spans residues 1–25; that stretch reads MFVRIGFVVAASIAAVTVKRLNVKP. Positions 22–63 are disordered; it reads NVKPSKPSKPSDNGEGGDKEQSVDPDYNLNDKNLQEEEEEEE. Residues 123-341 adopt a coiled-coil conformation; that stretch reads EMAYNDGELE…KQVEGLQMNR (219 aa). Residues 269 to 290 are leucine-zipper 1; it reads LEVQVMELKRKNRELQHEKREL. Disordered regions lie at residues 398 to 482, 504 to 536, 612 to 718, and 736 to 755; these read GSER…SMNK, FGQVDQESPGTPETPNLPRIRTQQQASSPGEGL, TATG…GNKV, and SKKEGAPSLISSGTGNSSAA. At S399 the chain carries Phosphoserine. The span at 409–419 shows a compositional bias: polar residues; that stretch reads ESNYSQPSSPG. The segment covering 427-439 has biased composition (low complexity); that stretch reads SMDSSTSRFSSFS. Composition is skewed to polar residues over residues 504–517 and 612–624; these read FGQVDQESPGTPET and TATGDQSNESNES. Positions 670–706 are enriched in pro residues; that stretch reads ARPPLPGGGPPPPPPPPGGGPPPPPGGGPPPPPPPPG. Positions 744–755 are enriched in polar residues; it reads LISSGTGNSSAA. Residues 802-823 are leucine-zipper 2; it reads LLAFVSWLDEELSFLVDERAVL. Residues 979–1004 form a disordered region; sequence RSRAKTESGDNNNNNNNNSNEEESVN.

In terms of tissue distribution, expressed in cauline leaves, rosette leaves, stems and flowers, but not in roots.

The protein localises to the plastid. Its subcellular location is the chloroplast outer membrane. In terms of biological role, required for the positioning and movement of chloroplasts. Interacts with profilin and actin independent of its polymerization status. Regulates chloroplast localization by anchoring chloroplasts to the plasma membrane and forming a bridge to the actin cytoskeleton. This is Protein CHUP1, chloroplastic (CHUP1) from Arabidopsis thaliana (Mouse-ear cress).